A 1394-amino-acid polypeptide reads, in one-letter code: Tubulin glycylase 3E (1394 aa).

Disordered regions lie at residues 201-230, 563-582, 620-663, and 682-706; these read KKKS…QRKE, NQKD…QNSI, DENE…TSNF, and STVK…NLKE. The segment covering 205–216 has biased composition (low complexity); it reads NFQNKSQSQLNN. Positions 217–230 are enriched in basic and acidic residues; that stretch reads HKNEEKKPSQQRKE. A compositionally biased stretch (low complexity) spans 568–582; sequence QSNQTSSVISQQNSI. Polar residues predominate over residues 627–655; it reads KENVLQQKKNQSNQIVTSQQQSNNYFKQE. Over residues 682 to 703 the composition is skewed to low complexity; that stretch reads STVKNSDNNNQNQTNPQNQNTN. In terms of domain architecture, TTL spans 911–1250; the sequence is RFIFNITVIA…QNNLQEDLEI (340 aa). ATP is bound by residues 1058-1061, lysine 1079, and aspartate 1081; that span reads QKYI. 2 IQ domains span residues 1320–1349 and 1348–1377; these read QYWG…QKFT and FTFA…QQQT.

It is found in the cell projection. Its subcellular location is the cilium. The protein localises to the cytoplasm. It localises to the cytoskeleton. The protein resides in the cilium axoneme. Its function is as follows. Probable glycylase which modifies tubulin, generating side chains of glycine on the gamma-carboxyl groups of specific glutamate residues within the C-terminal tail of tubulin. In Tetrahymena thermophila (strain SB210), this protein is Tubulin glycylase 3E (TTLL3E).